We begin with the raw amino-acid sequence, 159 residues long: Endoribonuclease YbeY (159 aa).

Residues His125, His129, and His135 each coordinate Zn(2+).

Belongs to the endoribonuclease YbeY family. Requires Zn(2+) as cofactor.

The protein localises to the cytoplasm. Functionally, single strand-specific metallo-endoribonuclease involved in late-stage 70S ribosome quality control and in maturation of the 3' terminus of the 16S rRNA. The chain is Endoribonuclease YbeY from Thermoanaerobacter pseudethanolicus (strain ATCC 33223 / 39E) (Clostridium thermohydrosulfuricum).